Consider the following 252-residue polypeptide: Protein PF0476 (252 aa).

Belongs to the CinA family.

In Pyrococcus furiosus (strain ATCC 43587 / DSM 3638 / JCM 8422 / Vc1), this protein is Protein PF0476.